The primary structure comprises 757 residues: Probable tRNA (uracil-O(2)-)-methyltransferase (757 aa).

Disordered stretches follow at residues 55–93 (EARG…GPEQ) and 108–138 (QQEE…GDFP). Gly residues predominate over residues 72–84 (PGPGQGSPGGGPG). At Ser78 the chain carries Phosphoserine. Positions 123-136 (DSGHPGHAEGREGD) are enriched in basic and acidic residues. Ser533 is subject to Phosphoserine. A C3H1-type zinc finger spans residues 713-743 (ACKTRLCWFFMHHPDGCALSTDCCPFAHGPA).

It belongs to the TRM44 family.

It is found in the cytoplasm. The catalysed reaction is uridine(44) in tRNA(Ser) + S-adenosyl-L-methionine = 2'-O-methyluridine(44) in tRNA(Ser) + S-adenosyl-L-homocysteine + H(+). Probable adenosyl-L-methionine (AdoMet)-dependent tRNA (uracil-O(2)-)-methyltransferase. This is Probable tRNA (uracil-O(2)-)-methyltransferase (TRMT44) from Homo sapiens (Human).